A 596-amino-acid chain; its full sequence is Isocitrate dehydrogenase kinase/phosphatase (596 aa).

Residues 316–322 (APGIRGM) and Lys-337 contribute to the ATP site. The active site involves Asp-372.

The protein belongs to the AceK family.

The protein localises to the cytoplasm. The enzyme catalyses L-seryl-[isocitrate dehydrogenase] + ATP = O-phospho-L-seryl-[isocitrate dehydrogenase] + ADP + H(+). Bifunctional enzyme which can phosphorylate or dephosphorylate isocitrate dehydrogenase (IDH) on a specific serine residue. This is a regulatory mechanism which enables bacteria to bypass the Krebs cycle via the glyoxylate shunt in response to the source of carbon. When bacteria are grown on glucose, IDH is fully active and unphosphorylated, but when grown on acetate or ethanol, the activity of IDH declines drastically concomitant with its phosphorylation. The polypeptide is Isocitrate dehydrogenase kinase/phosphatase (Cronobacter sakazakii (strain ATCC BAA-894) (Enterobacter sakazakii)).